Reading from the N-terminus, the 476-residue chain is uncharacterized protein (476 aa).

10 consecutive transmembrane segments (helical) span residues 4–24 (FFSF…LFGA), 81–101 (ALAI…AAFI), 141–161 (WMGV…FSGV), 174–194 (FDFP…LAIT), 207–227 (FVPL…VMNI), 233–253 (VIWS…GAAG), 300–320 (MIGI…LILL), 351–371 (FVTL…YIYA), 391–411 (ICTF…MWQL), and 414–434 (IIMA…SPVV).

This sequence belongs to the alanine or glycine:cation symporter (AGCS) (TC 2.A.25) family.

It localises to the cell inner membrane. This is an uncharacterized protein from Escherichia coli (strain K12).